Reading from the N-terminus, the 563-residue chain is Adenine deaminase (563 aa).

It belongs to the metallo-dependent hydrolases superfamily. Adenine deaminase family. Requires Mn(2+) as cofactor.

The catalysed reaction is adenine + H2O + H(+) = hypoxanthine + NH4(+). The chain is Adenine deaminase from Brucella anthropi (strain ATCC 49188 / DSM 6882 / CCUG 24695 / JCM 21032 / LMG 3331 / NBRC 15819 / NCTC 12168 / Alc 37) (Ochrobactrum anthropi).